The sequence spans 702 residues: Elongation factor G (702 aa).

The tr-type G domain maps to 8 to 290 (ARYRNIGISA…AVIEYLPAPT (283 aa)). Residues 17-24 (AHIDAGKT), 88-92 (DTPGH), and 142-145 (NKMD) contribute to the GTP site.

It belongs to the TRAFAC class translation factor GTPase superfamily. Classic translation factor GTPase family. EF-G/EF-2 subfamily.

Its subcellular location is the cytoplasm. Functionally, catalyzes the GTP-dependent ribosomal translocation step during translation elongation. During this step, the ribosome changes from the pre-translocational (PRE) to the post-translocational (POST) state as the newly formed A-site-bound peptidyl-tRNA and P-site-bound deacylated tRNA move to the P and E sites, respectively. Catalyzes the coordinated movement of the two tRNA molecules, the mRNA and conformational changes in the ribosome. In Photorhabdus laumondii subsp. laumondii (strain DSM 15139 / CIP 105565 / TT01) (Photorhabdus luminescens subsp. laumondii), this protein is Elongation factor G.